The sequence spans 448 residues: UDP-glucose 6-dehydrogenase (448 aa).

NAD(+) contacts are provided by residues 2-19 (NITFIGSGYVGLVSGIIM), Val-11, Asp-30, Lys-35, Thr-121, and Glu-152. Residues 148–152 (EFLRE), Lys-204, Asn-208, 249–253 (FLNAG), and Gly-257 contribute to the substrate site. Residue Cys-260 is the Nucleophile of the active site. Lys-263 provides a ligand contact to NAD(+). Position 321 (Lys-321) interacts with substrate. Arg-328 contacts NAD(+).

The protein belongs to the UDP-glucose/GDP-mannose dehydrogenase family.

The catalysed reaction is UDP-alpha-D-glucose + 2 NAD(+) + H2O = UDP-alpha-D-glucuronate + 2 NADH + 3 H(+). It functions in the pathway nucleotide-sugar biosynthesis; UDP-alpha-D-glucuronate biosynthesis; UDP-alpha-D-glucuronate from UDP-alpha-D-glucose: step 1/1. The sequence is that of UDP-glucose 6-dehydrogenase (udg) from Rickettsia felis (strain ATCC VR-1525 / URRWXCal2) (Rickettsia azadi).